The sequence spans 433 residues: CinA-like protein (433 aa).

The protein belongs to the CinA family.

This is CinA-like protein from Frankia casuarinae (strain DSM 45818 / CECT 9043 / HFP020203 / CcI3).